A 799-amino-acid polypeptide reads, in one-letter code: Zinc finger X-linked protein ZXDA (799 aa).

Residues 1 to 89 (MEIPKLLPAR…QPSGGGDDFF (89 aa)) are disordered. The span at 13 to 26 (LQGGGGGGIPAGGG) shows a compositional bias: gly residues. C2H2-type zinc fingers lie at residues 267–291 (YLCP…LLTH), 300–324 (FKCP…LQSH), 330–354 (FGCP…MKGH), 360–382 (FKCE…QRSH), 389–413 (YQCA…NRAH), 420–444 (FSCS…LRSH), 450–474 (FLCD…KRKH), 480–504 (FMCP…SITH), 510–534 (FVCP…SKKH), and 543–568 (SRCP…VKRH). Positions 267-573 (YLCPEALCGQ…MVKRHKVGQD (307 aa)) are required for interaction with ZXDC. The segment at 572–699 (QDLLAQLEAA…NMDEVSSVSV (128 aa)) is required for transcriptional activation.

The protein belongs to the ZXD family. As to quaternary structure, self-associates. Interacts with ZXDC and CIITA. As to expression, may be expressed in brain, heart, kidney, liver, lung, muscle and placenta.

Its subcellular location is the nucleus. Cooperates with CIITA to promote transcription of MHC class I and MHC class II genes. This Homo sapiens (Human) protein is Zinc finger X-linked protein ZXDA (ZXDA).